A 91-amino-acid polypeptide reads, in one-letter code: Non-specific lipid-transfer protein 1 (91 aa).

4 disulfide bridges follow: Cys-4–Cys-51, Cys-14–Cys-28, Cys-29–Cys-74, and Cys-49–Cys-88.

As to expression, expressed in seeds (at protein level).

Plant non-specific lipid-transfer proteins transfer phospholipids as well as galactolipids across membranes. May play a role in wax or cutin deposition in the cell walls of expanding epidermal cells and certain secretory tissues. Binds to both saturated and unsaturated lipids, with the highest binding efficiency for linoleic acid, followed by linolenic acid. In Foeniculum vulgare (Fennel), this protein is Non-specific lipid-transfer protein 1.